Reading from the N-terminus, the 249-residue chain is UDP-N-acetyl-D-mannosaminuronic acid transferase (249 aa).

This sequence belongs to the glycosyltransferase 26 family.

The catalysed reaction is UDP-N-acetyl-alpha-D-mannosaminouronate + N-acetyl-alpha-D-glucosaminyl-di-trans,octa-cis-undecaprenyl diphosphate = beta-D-ManNAcA-(1-&gt;4)-alpha-D-GlcNAc-di-trans,octa-cis-undecaprenyl diphosphate + UDP + H(+). It functions in the pathway bacterial outer membrane biogenesis; enterobacterial common antigen biosynthesis. Catalyzes the synthesis of Und-PP-GlcNAc-ManNAcA (Lipid II), the second lipid-linked intermediate involved in enterobacterial common antigen (ECA) synthesis. This chain is UDP-N-acetyl-D-mannosaminuronic acid transferase, found in Pectobacterium atrosepticum (strain SCRI 1043 / ATCC BAA-672) (Erwinia carotovora subsp. atroseptica).